We begin with the raw amino-acid sequence, 344 residues long: Phosphate acyltransferase (344 aa).

Belongs to the PlsX family. As to quaternary structure, homodimer. Probably interacts with PlsY.

Its subcellular location is the cytoplasm. It carries out the reaction a fatty acyl-[ACP] + phosphate = an acyl phosphate + holo-[ACP]. Its pathway is lipid metabolism; phospholipid metabolism. Functionally, catalyzes the reversible formation of acyl-phosphate (acyl-PO(4)) from acyl-[acyl-carrier-protein] (acyl-ACP). This enzyme utilizes acyl-ACP as fatty acyl donor, but not acyl-CoA. This is Phosphate acyltransferase from Actinobacillus pleuropneumoniae serotype 5b (strain L20).